The following is a 631-amino-acid chain: MSATKLTRREQRARAQHFIDTLEGTAFPNSKRIYITGTHPGVRVPMREIQLSPTLIGGSKEQPQYEENEAIPVYDTSGPYGDPQIAINVQQGLAKLRQPWIDARGDTEELTVRSSDYTKARLADDGLDELRFSGVLTPKRAKAGRRVTQLHYARQGIITPEMEFIAIRENMGRERIRSEVLRHQHPGMSFGARLPENITAEFVRDEVAAGRAIIPANINHPESEPMIIGRNFLVKVNANIGNSAVTSSIEEEVEKLVWSTRWGADTVMDLSTGRYIHETREWILRNSPVPIGTVPIYQALEKVNGIAEDLTWEAFRDTLLEQAEQGVDYFTIHAGVLLRYVPMTAKRLTGIVSRGGSIMAKWCLSHHQENFLYQHFREICEICAAYDVSLSLGDGLRPGSIQDANDEAQFAELHTLGELTKIAWEYDVQVMIEGPGHVPMQMIRRNMTEELEHCHEAPFYTLGPLTTDIAPGYDHFTSGIGAAMIGWFGCAMLCYVTPKEHLGLPNKEDVKQGLITYKIAAHAADLAKGHPGAQIRDNAMSKARFEFRWEDQFNLALDPFTARAYHDETLPQESGKVAHFCSMCGPKFCSMKISQEVRDYAATQTIEMGMADMSENFRARGGEIYLRKEEA.

Substrate is bound by residues Asn239, Met268, Tyr297, His333, 353–355 (SRG), 394–397 (DGLR), and Glu433. Residue His437 participates in Zn(2+) binding. Tyr460 is a substrate binding site. His501 provides a ligand contact to Zn(2+). The [4Fe-4S] cluster site is built by Cys581, Cys584, and Cys589.

It belongs to the ThiC family. In terms of assembly, homodimer. [4Fe-4S] cluster is required as a cofactor.

The catalysed reaction is 5-amino-1-(5-phospho-beta-D-ribosyl)imidazole + S-adenosyl-L-methionine = 4-amino-2-methyl-5-(phosphooxymethyl)pyrimidine + CO + 5'-deoxyadenosine + formate + L-methionine + 3 H(+). The protein operates within cofactor biosynthesis; thiamine diphosphate biosynthesis. In terms of biological role, catalyzes the synthesis of the hydroxymethylpyrimidine phosphate (HMP-P) moiety of thiamine from aminoimidazole ribotide (AIR) in a radical S-adenosyl-L-methionine (SAM)-dependent reaction. In Escherichia coli (strain 55989 / EAEC), this protein is Phosphomethylpyrimidine synthase.